A 291-amino-acid chain; its full sequence is T-cell leukemia homeobox protein 3 (291 aa).

A disordered region spans residues 1 to 56 (MEAPASAQTPHPHEPISFGIDQILNSPDQDSAPAPRGPDGASYLGGPPGGRPGATY). The homeobox DNA-binding region spans 166–225 (RKKPRTSFSRVQICELEKRFHRQKYLASAERAALAKSLKMTDAQVKTWFQNRRTKWRRQT).

It is found in the nucleus. The polypeptide is T-cell leukemia homeobox protein 3 (TLX3) (Homo sapiens (Human)).